The sequence spans 306 residues: Uracil phosphoribosyltransferase homolog (306 aa).

Disordered stretches follow at residues 1–28 (MATELRCPDSMPCHNQQVNSASTQNPEP) and 58–87 (SSVPAELDPQASGGATFNSENNGGTGNYDA). 2 stretches are compositionally biased toward polar residues: residues 13 to 28 (CHNQQVNSASTQNPEP) and 70 to 79 (GGATFNSENN). GTP-binding positions include R130, R139, and 173–176 (EKGN). A 5-phospho-alpha-D-ribose 1-diphosphate-binding site is contributed by R183. GTP is bound by residues R200 and R229. 235–243 (YPILSTGNT) is a binding site for 5-phospho-alpha-D-ribose 1-diphosphate. Position 296–298 (296–298 (THF)) interacts with uracil.

It belongs to the UPRTase family.

The protein resides in the cytoplasm. It is found in the nucleus. In Bos taurus (Bovine), this protein is Uracil phosphoribosyltransferase homolog (UPRT).